The following is a 287-amino-acid chain: BURP domain-containing protein 2 (287 aa).

Residues 1 to 21 form the signal peptide; that stretch reads MARSLAALLLLLVAAAGASHA. Positions 67–287 constitute a BURP domain; that stretch reads FFLEKDLFPG…PQDDMLWVRN (221 aa).

As to expression, expressed in shoot.

This Oryza sativa subsp. japonica (Rice) protein is BURP domain-containing protein 2 (BURP2).